Reading from the N-terminus, the 221-residue chain is Sperm acrosome membrane-associated protein 3 (221 aa).

Residues 1-69 (MGICMSMYTQ…EARSRAPRRQ (69 aa)) are Cytoplasmic-facing. A helical; Signal-anchor for type II membrane protein transmembrane segment spans residues 70–90 (LCPPGITWLALAYLLSCLLAS). Residues 91–221 (SKAKVFSRCE…LSDWVDGCDF (131 aa)) lie on the Extracellular side of the membrane. The C-type lysozyme domain maps to 94 to 221 (KVFSRCELAK…LSDWVDGCDF (128 aa)). Cystine bridges form between cysteine 99-cysteine 219, cysteine 123-cysteine 207, cysteine 157-cysteine 172, and cysteine 168-cysteine 186.

It belongs to the glycosyl hydrolase 22 family. Interacts with ASTL. In terms of tissue distribution, the processed form is expressed in sperm (at protein level). Expressed strongly in testis and epididymis and weakly in pancreas.

It localises to the cytoplasmic vesicle. It is found in the secretory vesicle. The protein localises to the acrosome membrane. Its subcellular location is the secreted. Functionally, sperm surface membrane protein that may be involved in sperm-egg plasma membrane adhesion and fusion during fertilization. It could be a potential receptor for the egg oligosaccharide residue N-acetylglucosamine, which is present in the extracellular matrix over the egg plasma membrane. The processed form has no detectable bacteriolytic activity in vitro. The protein is Sperm acrosome membrane-associated protein 3 (Spaca3) of Mus musculus (Mouse).